A 283-amino-acid chain; its full sequence is Methyltransferase cpsF (283 aa).

This sequence belongs to the methyltransferase superfamily. LaeA methyltransferase family.

The enzyme catalyses campesine A + S-adenosyl-L-methionine = campesine B + S-adenosyl-L-homocysteine + H(+). The protein operates within alkaloid biosynthesis. Methyltransferase; part of the gene cluster that mediates the biosynthesis of campesine G, a dimeric indole piperazine alkaloid that shows good insecticidal activity Galleria mellonella. Within the pathway, cpsF methylates campesine A at N13 of piperazine ring to produce campesine B. The non-canonical non-ribosomal peptide synthetase cpsA catalyzes the first steps of the pathway by producing L-tryptophanal and L-valinal from their respective amino-acids. These products condensate spontaneously to form trypyl-valyl pyrazine also known as didehydrocampesine A. The NmrA-like family domain-containing oxidoreductase cpsB is the next enzyme in cps pathway and reduces the unstable didehydrocampesine A to campesine A. The methyltransferase cpsF and the acetyltransferase cpsE both recognize N13 of piperazine ring to carry out methylation and acetylation of campesine A to produce campesine C and B, respectively. The cytochrome P450 monooxygenase cpsD then acts as a dimerase that catalyzes oxidative heterocoupling between campesine B and C to produce heterodimers with unexpected 6/5/6/6/6/6/5/6 eight-ring scaffold called campesine D. Finally,the cytochrome P450 monooxygenase cpsC is a regioselective dehydrogenase that catalyzes dehydrogenation reaction towards C2-N1 to produce campesine G. This is Methyltransferase cpsF from Aspergillus campestris (strain IBT 28561).